The following is a 275-amino-acid chain: MSIRLYKSYTPGTRNRALSSFTEITKTKPEKSLIQKNHRSKGRNNRGVITIRHRGGGHKRRYRIIDFGRKKHNVEGVVAAIEYDPNRNARIALLHYTDGEKRYILHPNNLNVGDRVVSGMEAELVIGNALPLEKIPLGASVHNIELIPNRGGQIVRAAGTSAKILAKEGDYVTLRLPSKEIRLIRKECFATIGEVSNNDAFLVQSGKAGRTRWLGKRPTVRGSVMNPCDHPHGGGEGRAPIGRTRPLTPWGKPALGIKTRKNKKASDAYILRRRS.

Positions 219–255 (TVRGSVMNPCDHPHGGGEGRAPIGRTRPLTPWGKPAL) are disordered.

Belongs to the universal ribosomal protein uL2 family. In terms of assembly, part of the 50S ribosomal subunit.

The protein localises to the plastid. It localises to the chloroplast. The protein is Large ribosomal subunit protein uL2c (rpl2) of Trieres chinensis (Marine centric diatom).